A 294-amino-acid chain; its full sequence is Probable HTH-type transcriptional regulator LrrA (294 aa).

Residues M1–T58 form the HTH lysR-type domain. The H-T-H motif DNA-binding region spans F18–A37.

It belongs to the LysR transcriptional regulatory family.

In Synechococcus elongatus (strain ATCC 33912 / PCC 7942 / FACHB-805) (Anacystis nidulans R2), this protein is Probable HTH-type transcriptional regulator LrrA (lrrA).